We begin with the raw amino-acid sequence, 412 residues long: Gamma-glutamyl phosphate reductase (412 aa).

Belongs to the gamma-glutamyl phosphate reductase family.

The protein resides in the cytoplasm. The enzyme catalyses L-glutamate 5-semialdehyde + phosphate + NADP(+) = L-glutamyl 5-phosphate + NADPH + H(+). It functions in the pathway amino-acid biosynthesis; L-proline biosynthesis; L-glutamate 5-semialdehyde from L-glutamate: step 2/2. Catalyzes the NADPH-dependent reduction of L-glutamate 5-phosphate into L-glutamate 5-semialdehyde and phosphate. The product spontaneously undergoes cyclization to form 1-pyrroline-5-carboxylate. The protein is Gamma-glutamyl phosphate reductase of Actinobacillus pleuropneumoniae serotype 7 (strain AP76).